A 542-amino-acid polypeptide reads, in one-letter code: 4-coumarate--CoA ligase-like 5 (542 aa).

ATP contacts are provided by serine 204, serine 205, glycine 206, threonine 207, threonine 208, and lysine 212. Phenylalanine 262 is a (E)-4-coumaroyl-AMP binding site. Arginine 282 lines the CoA pocket. Positions 284–353 (DFIAALRAIE…SVFPNVELVQ (70 aa)) are SBD1. (E)-4-coumaroyl-AMP is bound by residues glycine 331, glutamine 353, glycine 354, and threonine 358. Residues glutamine 353, glycine 354, threonine 358, aspartate 418, and arginine 433 each coordinate ATP. Residues 354–397 (GYGLTESSGAVAATVGPEESKAYGSVGKLGSHLQAKIVDPSTGY) form an SBD2 region. Lysine 435 and lysine 439 together coordinate (E)-4-coumaroyl-AMP. Residues lysine 441 and glycine 442 each coordinate CoA. Position 524 (lysine 524) interacts with ATP.

This sequence belongs to the ATP-dependent AMP-binding enzyme family. Requires Mg(2+) as cofactor.

It carries out the reaction (E)-4-coumarate + ATP + CoA = (E)-4-coumaroyl-CoA + AMP + diphosphate. The enzyme catalyses (E)-4-coumarate + ATP + H(+) = (E)-4-coumaroyl-AMP + diphosphate. It catalyses the reaction (E)-4-coumaroyl-AMP + CoA = (E)-4-coumaroyl-CoA + AMP + H(+). Carboxylate--CoA ligase that may use 4-coumarate as substrate. Follows a two-step reaction mechanism, wherein the carboxylate substrate first undergoes adenylation by ATP, followed by a thioesterification in the presence of CoA to yield the final CoA thioester. In Oryza sativa subsp. japonica (Rice), this protein is 4-coumarate--CoA ligase-like 5 (4CLL5).